The following is a 195-amino-acid chain: Probable DNA-directed RNA polymerase subunit delta (195 aa).

The region spanning Leu-14–Trp-83 is the HTH HARE-type domain. Composition is skewed to acidic residues over residues Gly-119–Glu-138 and Tyr-145–Glu-195. The segment at Gly-119–Glu-195 is disordered.

This sequence belongs to the RpoE family. In terms of assembly, RNAP is composed of a core of 2 alpha, a beta and a beta' subunits. The core is associated with a delta subunit and one of several sigma factors.

Functionally, participates in both the initiation and recycling phases of transcription. In the presence of the delta subunit, RNAP displays an increased specificity of transcription, a decreased affinity for nucleic acids, and an increased efficiency of RNA synthesis because of enhanced recycling. The polypeptide is Probable DNA-directed RNA polymerase subunit delta (Streptococcus gordonii (strain Challis / ATCC 35105 / BCRC 15272 / CH1 / DL1 / V288)).